Consider the following 354-residue polypeptide: MSGYPPTSQGYGYGYGGGNQPPPPQPPYSSGGNNPPYGSSTTSSPYAVPYGASKPQSSSSSAPTYGSSSYGAPPPSAPYAPSPGDYNKPPKEKPYGGGYGAPPPSGSSDYGSYGAGPRPSQPSGHGGGYGATPPHGVSDYGSYGGAPPRPASSGHGGGYGGYPPQASYGSPFASLIPSGFAPGTDPNIVACFQAADQDGSGFIDDKELQGALSSYQQRFSMRTVHLLMYLFTNSNAMKIGPKEFTALFYSLQNWRSIFERSDKDRSGRIDVNELRDALLSLGFSVSPVVLDLLVSKFDKSGGKNRAIEYDNFIECCLTVKGLTEKFKEKDTAYSGSATFNYESFMLTVLPFLIA.

Low complexity-rich tracts occupy residues 1–10 and 28–71; these read MSGYPPTSQG and YSSG…SSYG. The disordered stretch occupies residues 1–159; the sequence is MSGYPPTSQG…PASSGHGGGY (159 aa). Residues 72–81 show a composition bias toward pro residues; the sequence is APPPSAPYAP. The segment covering 106–117 has biased composition (low complexity); that stretch reads GSSDYGSYGAGP. 2 consecutive EF-hand domains span residues 183-218 and 249-284; these read GTDP…YQQR and YSLQ…LGFS. Ca(2+) contacts are provided by Asp196, Asp198, Ser200, Glu207, Asp262, Asp264, Ser266, Arg268, and Glu273.

In terms of biological role, potential calcium sensor. This Arabidopsis thaliana (Mouse-ear cress) protein is Probable calcium-binding protein CML50 (CML50).